We begin with the raw amino-acid sequence, 204 residues long: Ribonuclease HII (204 aa).

The region spanning 1–197 (MTLGIDEAGR…KNRILNPKLL (197 aa)) is the RNase H type-2 domain. D6, E7, and D103 together coordinate a divalent metal cation.

It belongs to the RNase HII family. The cofactor is Mn(2+). Requires Mg(2+) as cofactor.

Its subcellular location is the cytoplasm. The catalysed reaction is Endonucleolytic cleavage to 5'-phosphomonoester.. In terms of biological role, endonuclease that specifically degrades the RNA of RNA-DNA hybrids. The chain is Ribonuclease HII from Helicobacter pylori (strain HPAG1).